Reading from the N-terminus, the 271-residue chain is DNA-directed RNA polymerase subunit Rpo3 (271 aa).

This sequence belongs to the archaeal Rpo3/eukaryotic RPB3 RNA polymerase subunit family. As to quaternary structure, part of the RNA polymerase complex.

The protein resides in the cytoplasm. It carries out the reaction RNA(n) + a ribonucleoside 5'-triphosphate = RNA(n+1) + diphosphate. DNA-dependent RNA polymerase (RNAP) catalyzes the transcription of DNA into RNA using the four ribonucleoside triphosphates as substrates. The sequence is that of DNA-directed RNA polymerase subunit Rpo3 from Thermoplasma volcanium (strain ATCC 51530 / DSM 4299 / JCM 9571 / NBRC 15438 / GSS1).